A 439-amino-acid chain; its full sequence is MFFKTLKEAFKVKDVRARILFTIFILFVFRLGAHITVPGVNVQNLTEVSNLPFLNMMNLVSGNAMQNYSLFAMGVSPYITASIIVQLLQMDILPKFVEWSKQGEIGRRKLNQATRYITLVLAMAQSIGITAGFQAMSSLNIVQNPNWQSYLMIGAILTTGSMVVTWMGEQINEKGFGSGVSVIIFAGIVSSIPSAVKSVYDEKFLNVRPSEIPMSWLFVIGLVLSAIIIIYVTTFVQQAERKVPIQYTKLTQGAPTSSYLPLRVNPAGVIPVIFAGSITTAPATILQFLQRSQGSNVGWLSTLQDALSYTTWTGMLFYALLIVLFTFFYSFVQVNPEKMAENLQKQGSYIPSVRPGKGTEKYVSRLLMRLATVGALFLGLISIIPIAAQNVWGLPKIVALGGTSLLILIQVAIQAVKQLEGYLLKRKYAGFMDNPLETK.

Helical transmembrane passes span 19–39 (ILFT…TVPG), 68–88 (YSLF…VQLL), 116–136 (YITL…FQAM), 151–171 (LMIG…GEQI), 176–196 (FGSG…PSAV), 216–236 (WLFV…TTFV), 269–289 (VIPV…LQFL), 312–332 (WTGM…YSFV), 373–393 (VGAL…NVWG), and 396–416 (KIVA…IQAV).

Belongs to the SecY/SEC61-alpha family. Component of the Sec protein translocase complex. Heterotrimer consisting of SecY, SecE and SecG subunits. The heterotrimers can form oligomers, although 1 heterotrimer is thought to be able to translocate proteins. Interacts with the ribosome. Interacts with SecDF, and other proteins may be involved. Interacts with SecA.

The protein localises to the cell membrane. Functionally, the central subunit of the protein translocation channel SecYEG. Consists of two halves formed by TMs 1-5 and 6-10. These two domains form a lateral gate at the front which open onto the bilayer between TMs 2 and 7, and are clamped together by SecE at the back. The channel is closed by both a pore ring composed of hydrophobic SecY resides and a short helix (helix 2A) on the extracellular side of the membrane which forms a plug. The plug probably moves laterally to allow the channel to open. The ring and the pore may move independently. The chain is Protein translocase subunit SecY from Lactococcus lactis subsp. lactis (strain IL1403) (Streptococcus lactis).